Here is a 407-residue protein sequence, read N- to C-terminus: MSAVPLRNNKAIAADVRSITVLGATGSIGDSTMDLLRGAPERYRVEALTGNSNIEGLAKLAREFNSRFVAVADPARLGELREALAGTGIACGAGESAIIEAAARPADWVMAAVSGAAGLKPALAAVDRGATVALANKECLVCAGDFFMQRAAQAGACILPADSEHNALFQALSSGNREELVRVIITASGGPFRTWAPQDIEQATLEQALKHPNWSMGQKITIDSASMMNKGLEVIEASYLFALSPDEIDVLVHPQSIVHGMVEFSDRSVVAQLGAPDMRIPIAHCLGWPERIKGPSARLDLAKIGTLTFEAPDFERFPGLRLAYDSLRAGRGATTVFNAANEVAVAAFIGGHIRFGAIARLVEATLNDWTRSGNQAPLSSADDAIAIDHDARKRAAGLLPQIAAKAS.

NADPH contacts are provided by Thr25, Gly26, Ser27, Ile28, Asn53, and Asn136. Lys137 serves as a coordination point for 1-deoxy-D-xylulose 5-phosphate. Glu138 contacts NADPH. Asp162 contributes to the Mn(2+) binding site. 1-deoxy-D-xylulose 5-phosphate contacts are provided by Ser163, Glu164, Ser188, and His211. Position 164 (Glu164) interacts with Mn(2+). NADPH is bound at residue Gly217. Residues Ser224, Asn229, Lys230, and Glu233 each coordinate 1-deoxy-D-xylulose 5-phosphate. Residue Glu233 coordinates Mn(2+).

Belongs to the DXR family. Mg(2+) serves as cofactor. Requires Mn(2+) as cofactor.

The catalysed reaction is 2-C-methyl-D-erythritol 4-phosphate + NADP(+) = 1-deoxy-D-xylulose 5-phosphate + NADPH + H(+). It participates in isoprenoid biosynthesis; isopentenyl diphosphate biosynthesis via DXP pathway; isopentenyl diphosphate from 1-deoxy-D-xylulose 5-phosphate: step 1/6. In terms of biological role, catalyzes the NADPH-dependent rearrangement and reduction of 1-deoxy-D-xylulose-5-phosphate (DXP) to 2-C-methyl-D-erythritol 4-phosphate (MEP). The chain is 1-deoxy-D-xylulose 5-phosphate reductoisomerase from Bradyrhizobium sp. (strain ORS 278).